A 375-amino-acid chain; its full sequence is Succinyl-diaminopimelate desuccinylase (375 aa).

A Zn(2+)-binding site is contributed by histidine 66. Residue aspartate 68 is part of the active site. Residue aspartate 99 participates in Zn(2+) binding. Catalysis depends on glutamate 133, which acts as the Proton acceptor. Positions 134, 162, and 348 each coordinate Zn(2+).

Belongs to the peptidase M20A family. DapE subfamily. Homodimer. Requires Zn(2+) as cofactor. It depends on Co(2+) as a cofactor.

It catalyses the reaction N-succinyl-(2S,6S)-2,6-diaminopimelate + H2O = (2S,6S)-2,6-diaminopimelate + succinate. It participates in amino-acid biosynthesis; L-lysine biosynthesis via DAP pathway; LL-2,6-diaminopimelate from (S)-tetrahydrodipicolinate (succinylase route): step 3/3. Its function is as follows. Catalyzes the hydrolysis of N-succinyl-L,L-diaminopimelic acid (SDAP), forming succinate and LL-2,6-diaminopimelate (DAP), an intermediate involved in the bacterial biosynthesis of lysine and meso-diaminopimelic acid, an essential component of bacterial cell walls. The chain is Succinyl-diaminopimelate desuccinylase from Stenotrophomonas maltophilia (strain K279a).